Here is a 274-residue protein sequence, read N- to C-terminus: Large ribosomal subunit protein uL2 (274 aa).

The interval Val195–Lys274 is disordered. Basic residues-rich tracts occupy residues Gly209–Asn220 and Pro244–Ser264.

This sequence belongs to the universal ribosomal protein uL2 family. In terms of assembly, part of the 50S ribosomal subunit. Forms a bridge to the 30S subunit in the 70S ribosome.

In terms of biological role, one of the primary rRNA binding proteins. Required for association of the 30S and 50S subunits to form the 70S ribosome, for tRNA binding and peptide bond formation. It has been suggested to have peptidyltransferase activity; this is somewhat controversial. Makes several contacts with the 16S rRNA in the 70S ribosome. The protein is Large ribosomal subunit protein uL2 of Bacteroides fragilis (strain ATCC 25285 / DSM 2151 / CCUG 4856 / JCM 11019 / LMG 10263 / NCTC 9343 / Onslow / VPI 2553 / EN-2).